The sequence spans 623 residues: Glucokinase regulatory protein (623 aa).

SIS domains lie at 90–286 (VQEV…QGVV) and 320–476 (VGIS…VQKF). Residues 109–110 (TS), glutamate 153, and 179–181 (SVG) each bind beta-D-fructose 1-phosphate. A beta-D-fructose 6-phosphate-binding site is contributed by 109–110 (TS). 179 to 181 (SVG) is a binding site for beta-D-fructose 6-phosphate. An important for interaction with GCK region spans residues 199–200 (AV). Glutamate 348 provides a ligand contact to beta-D-fructose 1-phosphate. Residues 463–465 (LLF) form an essential for interaction with GCK region.

This sequence belongs to the GCKR family. As to quaternary structure, interacts (fructose 6-phosphate bound form) with GCK.

It is found in the cytoplasm. The protein resides in the nucleus. The protein localises to the mitochondrion. In terms of biological role, regulates glucokinase (GCK) by forming an inactive complex with this enzyme. Acts by promoting GCK recruitment to the nucleus, possibly to provide a reserve of GCK that can be quickly released in the cytoplasm after a meal. The affinity of GCKR for GCK is modulated by fructose metabolites: GCKR with bound fructose 6-phosphate has increased affinity for GCK, while GCKR with bound fructose 1-phosphate has strongly decreased affinity for GCK and does not inhibit GCK activity. The sequence is that of Glucokinase regulatory protein from Mus musculus (Mouse).